The sequence spans 796 residues: N-terminal acetyltransferase B complex subunit MDM20 (796 aa).

Serine 2 is subject to N-acetylserine.

The protein belongs to the MDM20/NAA25 family. Component of the N-terminal acetyltransferase B (NatB) complex, which is composed of NAT3 and MDM20.

The protein resides in the cytoplasm. Its function is as follows. Non-catalytic subunit of the NatB N-terminal acetyltransferase, which catalyzes acetylation of the amino-terminal methionine residues of all proteins beginning with Met-Asp or Met-Glu and of some proteins beginning with Met-Asn or Met-Met. NatB acetylates TPM1 protein and regulates tropomyocin-actin interactions. MDM20 is required for mitochondrial inheritance during budding and together with TPM1, is essential for the integrity and assembly of actin cables. Genetically interacts with CIN8. This is N-terminal acetyltransferase B complex subunit MDM20 (MDM20) from Saccharomyces cerevisiae (strain ATCC 204508 / S288c) (Baker's yeast).